A 281-amino-acid chain; its full sequence is uncharacterized protein (281 aa).

This is an uncharacterized protein from Mycoplasma pneumoniae (strain ATCC 29342 / M129 / Subtype 1) (Mycoplasmoides pneumoniae).